Consider the following 587-residue polypeptide: Aspartate--tRNA ligase (587 aa).

Glu-174 serves as a coordination point for L-aspartate. The segment at 198 to 201 is aspartate; that stretch reads QTFK. Arg-220 contacts L-aspartate. Residues 220–222 and Gln-229 contribute to the ATP site; that span reads RDE. Residue His-447 coordinates L-aspartate. An ATP-binding site is contributed by Glu-481. Arg-488 contributes to the L-aspartate binding site. 533–536 lines the ATP pocket; the sequence is GLDR.

The protein belongs to the class-II aminoacyl-tRNA synthetase family. Type 1 subfamily. In terms of assembly, homodimer.

The protein resides in the cytoplasm. The catalysed reaction is tRNA(Asp) + L-aspartate + ATP = L-aspartyl-tRNA(Asp) + AMP + diphosphate. Catalyzes the attachment of L-aspartate to tRNA(Asp) in a two-step reaction: L-aspartate is first activated by ATP to form Asp-AMP and then transferred to the acceptor end of tRNA(Asp). This is Aspartate--tRNA ligase from Porphyromonas gingivalis (strain ATCC BAA-308 / W83).